The chain runs to 258 residues: Ubiquinone/menaquinone biosynthesis C-methyltransferase UbiE (258 aa).

S-adenosyl-L-methionine is bound by residues threonine 81, aspartate 102, and 130-131 (NA).

The protein belongs to the class I-like SAM-binding methyltransferase superfamily. MenG/UbiE family.

It carries out the reaction a 2-demethylmenaquinol + S-adenosyl-L-methionine = a menaquinol + S-adenosyl-L-homocysteine + H(+). The catalysed reaction is a 2-methoxy-6-(all-trans-polyprenyl)benzene-1,4-diol + S-adenosyl-L-methionine = a 5-methoxy-2-methyl-3-(all-trans-polyprenyl)benzene-1,4-diol + S-adenosyl-L-homocysteine + H(+). The protein operates within quinol/quinone metabolism; menaquinone biosynthesis; menaquinol from 1,4-dihydroxy-2-naphthoate: step 2/2. It functions in the pathway cofactor biosynthesis; ubiquinone biosynthesis. In terms of biological role, methyltransferase required for the conversion of demethylmenaquinol (DMKH2) to menaquinol (MKH2) and the conversion of 2-polyprenyl-6-methoxy-1,4-benzoquinol (DDMQH2) to 2-polyprenyl-3-methyl-6-methoxy-1,4-benzoquinol (DMQH2). The polypeptide is Ubiquinone/menaquinone biosynthesis C-methyltransferase UbiE (Sinorhizobium fredii (strain NBRC 101917 / NGR234)).